A 291-amino-acid polypeptide reads, in one-letter code: Phosphatidylglycerol--prolipoprotein diacylglyceryl transferase (291 aa).

A run of 4 helical transmembrane segments spans residues 24–44, 64–84, 99–119, and 125–145; these read WYALAYIGGIMLGWLYARALL, FILWVTIGIILGGRTGYVLFY, IWKGGMSFHGGFMGCVVAVIL, and GLPILSLGDVATAVGPIGLFL. A 1,2-diacyl-sn-glycero-3-phospho-(1'-sn-glycerol) is bound at residue Arg147. The next 3 helical transmembrane spans lie at 187 to 207, 211 to 231, and 247 to 267; these read ATLEGLVLFTILALMIRAGAL, GLVLGSFITLYAMARIAGEFF, and MGMLLSAPMIIAGLAIICVAW.

The protein belongs to the Lgt family.

The protein resides in the cell inner membrane. The enzyme catalyses L-cysteinyl-[prolipoprotein] + a 1,2-diacyl-sn-glycero-3-phospho-(1'-sn-glycerol) = an S-1,2-diacyl-sn-glyceryl-L-cysteinyl-[prolipoprotein] + sn-glycerol 1-phosphate + H(+). It participates in protein modification; lipoprotein biosynthesis (diacylglyceryl transfer). Its function is as follows. Catalyzes the transfer of the diacylglyceryl group from phosphatidylglycerol to the sulfhydryl group of the N-terminal cysteine of a prolipoprotein, the first step in the formation of mature lipoproteins. The chain is Phosphatidylglycerol--prolipoprotein diacylglyceryl transferase from Nitrobacter hamburgensis (strain DSM 10229 / NCIMB 13809 / X14).